The sequence spans 195 residues: Holliday junction branch migration complex subunit RuvA (195 aa).

The segment at 1 to 64 (MIASIRGVIQ…EDALTLYGFS (64 aa)) is domain I. The tract at residues 65–139 (DNAQRSLFEQ…GKIDFRQLAA (75 aa)) is domain II. Residues 139–143 (ASGST) are flexible linker. Residues 144 to 195 (SVSALDRELSEILVSLGYSAAEAAAAIASLPSDAPPTLEERLRLALRYFGSA) form a domain III region.

This sequence belongs to the RuvA family. In terms of assembly, homotetramer. Forms an RuvA(8)-RuvB(12)-Holliday junction (HJ) complex. HJ DNA is sandwiched between 2 RuvA tetramers; dsDNA enters through RuvA and exits via RuvB. An RuvB hexamer assembles on each DNA strand where it exits the tetramer. Each RuvB hexamer is contacted by two RuvA subunits (via domain III) on 2 adjacent RuvB subunits; this complex drives branch migration. In the full resolvosome a probable DNA-RuvA(4)-RuvB(12)-RuvC(2) complex forms which resolves the HJ.

The protein localises to the cytoplasm. The RuvA-RuvB-RuvC complex processes Holliday junction (HJ) DNA during genetic recombination and DNA repair, while the RuvA-RuvB complex plays an important role in the rescue of blocked DNA replication forks via replication fork reversal (RFR). RuvA specifically binds to HJ cruciform DNA, conferring on it an open structure. The RuvB hexamer acts as an ATP-dependent pump, pulling dsDNA into and through the RuvAB complex. HJ branch migration allows RuvC to scan DNA until it finds its consensus sequence, where it cleaves and resolves the cruciform DNA. This Chloroflexus aggregans (strain MD-66 / DSM 9485) protein is Holliday junction branch migration complex subunit RuvA.